Consider the following 238-residue polypeptide: tRNA (guanine-N(7)-)-methyltransferase (238 aa).

Residues Glu-70, Asp-95, Asp-122, and Asp-145 each contribute to the S-adenosyl-L-methionine site. Asp-145 is a catalytic residue. Residues Lys-149, Asp-181, and 216–219 (TKFE) each bind substrate.

The protein belongs to the class I-like SAM-binding methyltransferase superfamily. TrmB family.

The catalysed reaction is guanosine(46) in tRNA + S-adenosyl-L-methionine = N(7)-methylguanosine(46) in tRNA + S-adenosyl-L-homocysteine. It functions in the pathway tRNA modification; N(7)-methylguanine-tRNA biosynthesis. Functionally, catalyzes the formation of N(7)-methylguanine at position 46 (m7G46) in tRNA. The protein is tRNA (guanine-N(7)-)-methyltransferase of Neisseria gonorrhoeae (strain ATCC 700825 / FA 1090).